The chain runs to 640 residues: Chaperone protein HtpG (640 aa).

An a; substrate-binding region spans residues 1-352 (MTEQTATQNY…SADLPLNVSR (352 aa)). Residues 353-571 (ELLQESRDVK…DGELSPQLIR (219 aa)) form a b region. The interval 572–640 (MLKQAGQAVP…VKRINSLLLK (69 aa)) is c.

The protein belongs to the heat shock protein 90 family. Homodimer.

It is found in the cytoplasm. In terms of biological role, molecular chaperone. Has ATPase activity. The sequence is that of Chaperone protein HtpG from Acinetobacter baylyi (strain ATCC 33305 / BD413 / ADP1).